Here is a 237-residue protein sequence, read N- to C-terminus: UPF0173 metal-dependent hydrolase BCAN_B0597 (237 aa).

The protein belongs to the UPF0173 family.

This is UPF0173 metal-dependent hydrolase BCAN_B0597 from Brucella canis (strain ATCC 23365 / NCTC 10854 / RM-666).